A 382-amino-acid chain; its full sequence is MAPTQSKVKIHNLAEAHEKVLRAFPIEVEQNSEGNKLLVKQIRIRTLGHADHSNDSICFLNTYGFIKEAVSQTEFMRAGQRPESKNTLTACMLPFGPGPNIGSPQKMLEYAEDIKIHVRKTAGCKEQIVFSLDRTPQVFRGFQFPRDRYVCVPSDKYIKSPGKLVAGPNYCYTITFLSLTFCPSSQKFKVPRPILNFRSTRMRGIHLEIIMKITCSENSPIRKTLITDDPENGPKASVWIHLCNLYKGRNPIKVYDEAYFAEKCKQMLLSVGISDLWGPTIAVHANGKIPKSASLYFNSRGWALHPIADASPTMAKQLWSIGCEIIEVNAILQGSDYSALVDHPDVIYRKIRIDPAKKQYAHSKWNPFKKAISMPDLTGISI.

The protein belongs to the morbillivirus/respirovirus/rubulavirus M protein family.

It is found in the virion. Its function is as follows. The M protein has a crucial role in virus assembly and interacts with the RNP complex as well as with the viral membrane. The polypeptide is Matrix protein (M) (Human parainfluenza 4b virus (strain 68-333) (HPIV-4b)).